A 374-amino-acid polypeptide reads, in one-letter code: Translocating chain-associated membrane protein 1 (374 aa).

The Cytoplasmic portion of the chain corresponds to 1–29 (MAIRKKSTKSPPVLSHEFVLQNHADIVSC). A helical transmembrane segment spans residues 30–50 (VAMVFLLGLMFEITAKASIIF). At 51-76 (VTLQYNVTLPATEEQATESVSLYYYG) the chain is on the lumenal side. Asn-56 is a glycosylation site (N-linked (GlcNAc...) asparagine). Residues 77–97 (IKDLATVFFYMLVAIIIHAVI) form a helical membrane-spanning segment. Residues 98-121 (QEYMLDKINRRMHFSKTKHSKFNE) lie on the Cytoplasmic side of the membrane. The 210-residue stretch at 117–326 (SKFNESGQLS…NFQLRRWREH (210 aa)) folds into the TLC domain. A helical transmembrane segment spans residues 122 to 142 (SGQLSAFYLFACVWGTFILIS). At 143–159 (ENYISDPTILWRAYPHN) the chain is on the lumenal side. A helical transmembrane segment spans residues 160–180 (LMTFQMKFFYISQLAYWLHAF). Residues 181–192 (PELYFQKTKKED) are Cytoplasmic-facing. The chain crosses the membrane as a helical span at residues 193–213 (IPRQLVYIGLYLFHIAGAYLL). Residues 214 to 217 (NLNH) are Lumenal-facing. A helical transmembrane segment spans residues 218-238 (LGLVLLVLHYFVEFLFHISRL). Residues 239–251 (FYFSNEKYQKGFS) are Cytoplasmic-facing. A helical membrane pass occupies residues 252–272 (LWAVLFVLGRLLTLILSVLTV). Topologically, residues 273–297 (GFGLARAENQKLDFSTGNFNVLAVR) are lumenal. Residues 298–318 (IAVLASICVTQAFMMWKFINF) form a helical membrane-spanning segment. Topologically, residues 319–374 (QLRRWREHSAFQAPAVKKKPTVTKGRSSKKGTENGVNGTLTSNVADSPRNKKEKSS) are cytoplasmic. Residues 334–347 (VKKKPTVTKGRSSK) are compositionally biased toward basic residues. The tract at residues 334–374 (VKKKPTVTKGRSSKKGTENGVNGTLTSNVADSPRNKKEKSS) is disordered. Residues 352 to 363 (NGVNGTLTSNVA) show a composition bias toward polar residues. Ser-365 carries the post-translational modification Phosphoserine.

It belongs to the TRAM family. In terms of assembly, interacts with SEC61B. May interact with Derlin-1/DERL1. As to quaternary structure, (Microbial infection) Interacts with human cytomegalovirus/HHV-5 proteins US2 and US11. In terms of processing, N-glycosylated.

It localises to the endoplasmic reticulum membrane. In terms of biological role, involved in the translocation of nascent protein chains into or through the endoplasmic reticulum (ER) membrane by facilitating the proper chain positioning at the SEC61 channel. Regulates the exposure of nascent secretory protein chain to the cytosol during translocation into the ER. May affect the phospholipid bilayer in the vicinity of the lateral gate of the SEC61 channel, thereby facilitating ER protein transport. Intimately associates with transmembrane (TM) domain of nascent membrane proteins during the entire integration process into the ER membrane. Associates with the second TM domain of G-protein-coupled receptor opsin/OPSD nascent chain in the ER membrane, which may facilitate its integration into the membrane. Under conditions of ER stress, participates in the disposal of misfolded ER membrane proteins during the unfolded protein response (UPR), an integrated stress response (ISR) pathway, by selectively retrotranslocating misfolded ER-membrane proteins from the ER into the cytosol where they are ubiquitinated and degraded by the proteasome. Its function is as follows. (Microbial infection) In case of cytomegalovirus infection, participates in US2- and US11-mediated ER-to-cytosol retrotranslocation and subsequent degradation of major histocompatibility complex (MHC) class I heavy chains, thereby decreasing the immune detection by cytotoxic T-cells. This chain is Translocating chain-associated membrane protein 1, found in Homo sapiens (Human).